A 188-amino-acid chain; its full sequence is MTNNLKQRRIILDLAVTLDGFIEGKNGEVDWCIMDPDMGFTDFLNQIDTILYGRKSFDLWGQYIPKNEDPDTEKELWKLVHSKKKYVFSRTQNEIDNQAIFINDNILEEVNKLKKNPGKDIWLYGGASLITTFINLGLVDEFRLSIHPVVLGEGKPLFIDVKQRINLKMVNTRTFSSGVVQIVYHWNG.

Residues 121–139 (IWLYGGASLITTFINLGLV) form a helical membrane-spanning segment.

To B.subtilis YwjB.

The protein localises to the membrane. This is an uncharacterized protein from Bacillus subtilis (strain 168).